The chain runs to 290 residues: MASQYSVRKVGAPYTLEHRVYIEKDGVPVSPFHDIPLYANAEQTILNMVVEIPRWTNAKQEISKEELLNPIKQDTKKGKLRFVRNCFPHKGYLWNYGAFPQTWEDPNSIHPETKAKGDNDPLDVCEIGELVGYTGQVKQVKVLGVMALLDEEETDWKVIVIDVNDPLAPKLNDVEDVERHLPGLIRATNEWFRIYKIPDGKPENQFAFTGECKNKTYAMDVVRECNEAWERLITGKTAPGGVSTTNVTVQHSSSRVAPDQLPPLPPNENLPPAPIDSSIDKWFFISGASA.

Arg-81 is a diphosphate binding site. The Mg(2+) site is built by Asp-118, Asp-123, and Asp-155.

This sequence belongs to the PPase family. The cofactor is Mg(2+).

The protein localises to the cytoplasm. The enzyme catalyses diphosphate + H2O = 2 phosphate + H(+). This is Inorganic pyrophosphatase (ipp-1) from Neurospora crassa (strain ATCC 24698 / 74-OR23-1A / CBS 708.71 / DSM 1257 / FGSC 987).